The primary structure comprises 294 residues: 4-hydroxy-tetrahydrodipicolinate synthase (294 aa).

Thr-47 is a pyruvate binding site. Tyr-135 serves as the catalytic Proton donor/acceptor. Lys-163 functions as the Schiff-base intermediate with substrate in the catalytic mechanism. Val-205 serves as a coordination point for pyruvate.

The protein belongs to the DapA family. Homotetramer; dimer of dimers.

The protein resides in the cytoplasm. It carries out the reaction L-aspartate 4-semialdehyde + pyruvate = (2S,4S)-4-hydroxy-2,3,4,5-tetrahydrodipicolinate + H2O + H(+). It functions in the pathway amino-acid biosynthesis; L-lysine biosynthesis via DAP pathway; (S)-tetrahydrodipicolinate from L-aspartate: step 3/4. Its function is as follows. Catalyzes the condensation of (S)-aspartate-beta-semialdehyde [(S)-ASA] and pyruvate to 4-hydroxy-tetrahydrodipicolinate (HTPA). The protein is 4-hydroxy-tetrahydrodipicolinate synthase of Rickettsia canadensis (strain McKiel).